Consider the following 232-residue polypeptide: Ubiquinone biosynthesis O-methyltransferase (232 aa).

4 residues coordinate S-adenosyl-L-methionine: Arg-36, Gly-55, Asp-76, and Leu-120.

This sequence belongs to the methyltransferase superfamily. UbiG/COQ3 family.

The catalysed reaction is a 3-demethylubiquinol + S-adenosyl-L-methionine = a ubiquinol + S-adenosyl-L-homocysteine + H(+). The enzyme catalyses a 3-(all-trans-polyprenyl)benzene-1,2-diol + S-adenosyl-L-methionine = a 2-methoxy-6-(all-trans-polyprenyl)phenol + S-adenosyl-L-homocysteine + H(+). It participates in cofactor biosynthesis; ubiquinone biosynthesis. Its function is as follows. O-methyltransferase that catalyzes the 2 O-methylation steps in the ubiquinone biosynthetic pathway. The polypeptide is Ubiquinone biosynthesis O-methyltransferase (Pseudomonas fluorescens (strain ATCC BAA-477 / NRRL B-23932 / Pf-5)).